The sequence spans 990 residues: Presequence protease, mitochondrial (990 aa).

Residues 1 to 56 (MLRFQRTVPRVAIRRLANVYSEGAVLHGYKVRRAQEIPEMRMAAVELEHEMTGARH) constitute a mitochondrion transit peptide. His84 provides a ligand contact to Zn(2+). Glu87 functions as the Proton acceptor in the catalytic mechanism. Zn(2+) is bound at residue His88. The active site involves Glu160. Residue Glu185 participates in Zn(2+) binding.

The protein belongs to the peptidase M16 family. PreP subfamily. As to quaternary structure, monomer and homodimer; homodimerization is induced by binding of the substrate. Requires Zn(2+) as cofactor.

The protein localises to the mitochondrion intermembrane space. Its subcellular location is the mitochondrion matrix. In terms of biological role, degrades mitochondrial transit peptides after their cleavage in the intermembrane space or in the matrix, and presequence peptides; clearance of these peptides is required to keep the presequence processing machinery running. Preferentially cleaves the N-terminal side of paired basic amino acid residues. Also degrades other unstructured peptides. May function as an ATP-dependent peptidase as opposed to a metalloendopeptidase. The polypeptide is Presequence protease, mitochondrial (CYM1) (Eremothecium gossypii (strain ATCC 10895 / CBS 109.51 / FGSC 9923 / NRRL Y-1056) (Yeast)).